The following is a 117-amino-acid chain: UPF0102 protein RHOS4_03930 (117 aa).

Belongs to the UPF0102 family.

This Cereibacter sphaeroides (strain ATCC 17023 / DSM 158 / JCM 6121 / CCUG 31486 / LMG 2827 / NBRC 12203 / NCIMB 8253 / ATH 2.4.1.) (Rhodobacter sphaeroides) protein is UPF0102 protein RHOS4_03930.